A 91-amino-acid chain; its full sequence is Methanol dehydrogenase [cytochrome c] subunit 2 (91 aa).

Residues 1–22 (MKHVLTLLALASVFAVSNQALA) form the signal peptide. Cysteine 28 and cysteine 34 are disulfide-bonded.

This sequence belongs to the methanol dehydrogenase subunit 2 family. Heterotetramer composed of 2 alpha and 2 beta subunits.

It localises to the cell inner membrane. The catalysed reaction is 2 Fe(III)-[cytochrome cL] + a primary alcohol = 2 Fe(II)-[cytochrome cL] + an aldehyde + 2 H(+). In terms of biological role, catalyzes the oxidation of primary alcohols including methanol. This Methylophilus methylotrophus (Bacterium W3A1) protein is Methanol dehydrogenase [cytochrome c] subunit 2 (moxI).